We begin with the raw amino-acid sequence, 767 residues long: Start control protein cdc10 (767 aa).

A disordered region spans residues phenylalanine 17–threonine 44. A compositionally biased stretch (polar residues) spans glutamine 29–threonine 44. The 108-residue stretch at glutamate 66–serine 173 folds into the HTH APSES-type domain. A DNA-binding region (H-T-H motif) is located at residues isoleucine 98–isoleucine 119. Residues threonine 189–phenylalanine 230 are disordered. Residues phenylalanine 192–glutamine 221 show a composition bias toward polar residues. Serine 252 is subject to Phosphoserine. Residues lysine 261 to arginine 264 carry the Nuclear localization signal motif. ANK repeat units lie at residues leucine 356–arginine 385 and asparagine 483–isoleucine 512. The segment at valine 542–lysine 562 is disordered.

DSC1 contains cdc10 and sct1/res1. Interacts with pol5.

The protein resides in the nucleus. Its function is as follows. Major component of the cell cycle transcription factor complex MBF (MCB binding factor, also known as DSC1), that controls G1-S phase specific gene expression. Involved in the control of rRNA production, via interaction with pol5. May be involved in the transcriptional regulation of the cdc22 and cdt1 genes. In fission yeast, two genes, cdc10 and cdc2, are required for the cell cycle control called start, the point early in the G1 phase at which cells become committed to the mitotic cycle. This chain is Start control protein cdc10 (cdc10), found in Schizosaccharomyces pombe (strain 972 / ATCC 24843) (Fission yeast).